The chain runs to 67 residues: Sec-independent protein translocase protein TatA (67 aa).

A helical transmembrane segment spans residues 1–21; that stretch reads MFGLGGQELVLILLIVLLLFG.

Belongs to the TatA/E family. In terms of assembly, forms a complex with TatC.

Its subcellular location is the cell inner membrane. In terms of biological role, part of the twin-arginine translocation (Tat) system that transports large folded proteins containing a characteristic twin-arginine motif in their signal peptide across membranes. TatA could form the protein-conducting channel of the Tat system. The chain is Sec-independent protein translocase protein TatA from Chlorobaculum tepidum (strain ATCC 49652 / DSM 12025 / NBRC 103806 / TLS) (Chlorobium tepidum).